Consider the following 1220-residue polypeptide: DNA-directed RNA polymerase subunit beta (1220 aa).

Belongs to the RNA polymerase beta chain family. In terms of assembly, the RNAP catalytic core consists of 2 alpha, 1 beta, 1 beta' and 1 omega subunit. When a sigma factor is associated with the core the holoenzyme is formed, which can initiate transcription.

The enzyme catalyses RNA(n) + a ribonucleoside 5'-triphosphate = RNA(n+1) + diphosphate. In terms of biological role, DNA-dependent RNA polymerase catalyzes the transcription of DNA into RNA using the four ribonucleoside triphosphates as substrates. The chain is DNA-directed RNA polymerase subunit beta from Mesomycoplasma hyopneumoniae (strain 7448) (Mycoplasma hyopneumoniae).